Consider the following 106-residue polypeptide: MSKNFEWISPDFDLLEKEKTAVKPPSMYHVVLNNDDYTPMDFVIEILERFFSMDIERATQVMLKVHYEGKAICGTFTAEVAETKVAQVTMYSRENEHPLLCTMEQA.

It belongs to the ClpS family. Binds to the N-terminal domain of the chaperone ClpA.

In terms of biological role, involved in the modulation of the specificity of the ClpAP-mediated ATP-dependent protein degradation. The sequence is that of ATP-dependent Clp protease adapter protein ClpS from Vibrio cholerae serotype O1 (strain ATCC 39541 / Classical Ogawa 395 / O395).